The chain runs to 62 residues: Large ribosomal subunit protein uL30 (62 aa).

It belongs to the universal ribosomal protein uL30 family. In terms of assembly, part of the 50S ribosomal subunit.

The chain is Large ribosomal subunit protein uL30 from Staphylococcus carnosus (strain TM300).